The primary structure comprises 206 residues: MKILHIDSGILGEHSVSRRLTSAIVSQLKADRPDAEITYRDLASERVPHLTGAQIMAPADLEGVDALLAADVRIGRQMLEEFLAADTVVVGAPMYNFSIPSQLKAWIDRLAVAGKTFRYTEAGPEGLAKGKKLIVASTRGGHYSVAPASAMDHQETYLRSVFGFFGITDIEFIRAEGLNLGPDQKQFAIAEAEKTIAEGNVLKLAS.

FMN-binding positions include Ser-15–Ser-17, Met-94–Phe-97, and Thr-138–Gly-141.

It belongs to the azoreductase type 1 family. Homodimer. Requires FMN as cofactor.

It catalyses the reaction 2 a quinone + NADH + H(+) = 2 a 1,4-benzosemiquinone + NAD(+). The catalysed reaction is N,N-dimethyl-1,4-phenylenediamine + anthranilate + 2 NAD(+) = 2-(4-dimethylaminophenyl)diazenylbenzoate + 2 NADH + 2 H(+). In terms of biological role, quinone reductase that provides resistance to thiol-specific stress caused by electrophilic quinones. Functionally, also exhibits azoreductase activity. Catalyzes the reductive cleavage of the azo bond in aromatic azo compounds to the corresponding amines. This chain is FMN-dependent NADH:quinone oxidoreductase, found in Rhizobium meliloti (strain 1021) (Ensifer meliloti).